Reading from the N-terminus, the 223-residue chain is MAAIRASFLLAAAALLALWCSDHGGVVASDPSHLQDLCVADKASTVRVNGVACKDGEDVAAEDFFFSGLHMAGNTTNKQGSAVTAVNVAQVPGLNTLGISLARIDYALHGLNPPHTHPRATEILTVLEGSLYVGFVTSNPENKLFTKVINKGDVFVFPKGLVHFQFNYGTTDAVAIVALSSQNPGVITVANAVFGSKPSITDDILAKAFQVEKTVVDQIQAKF.

A signal peptide spans 1-28 (MAAIRASFLLAAAALLALWCSDHGGVVA). The cysteines at positions 38 and 53 are disulfide-linked. The 151-residue stretch at 67–217 (SGLHMAGNTT…AFQVEKTVVD (151 aa)) folds into the Cupin type-1 domain. Asn-74 is a glycosylation site (N-linked (GlcNAc...) asparagine). Positions 115, 117, 122, and 163 each coordinate Mn(2+).

This sequence belongs to the germin family. Oligomer (believed to be a pentamer but probably hexamer).

The protein localises to the secreted. It localises to the extracellular space. Its subcellular location is the apoplast. May play a role in plant defense. Probably has no oxalate oxidase activity even if the active site is conserved. This Oryza sativa subsp. japonica (Rice) protein is Putative germin-like protein 2-3.